Reading from the N-terminus, the 409-residue chain is Elongation factor Tu, chloroplastic (409 aa).

A tr-type G domain is found at 10–214 (KPHVNIGTIG…AVDTYIPTPE (205 aa)). The interval 19–26 (GHVDHGKT) is G1. GTP is bound at residue 19 to 26 (GHVDHGKT). Position 26 (Thr26) interacts with Mg(2+). The tract at residues 60–64 (GITIN) is G2. Residues 81-84 (DCPG) form a G3 region. GTP is bound by residues 81–85 (DCPGH) and 136–139 (NKED). The segment at 136–139 (NKED) is G4. Residues 174 to 176 (SAL) form a G5 region.

The protein belongs to the TRAFAC class translation factor GTPase superfamily. Classic translation factor GTPase family. EF-Tu/EF-1A subfamily.

Its subcellular location is the plastid. It localises to the chloroplast. It carries out the reaction GTP + H2O = GDP + phosphate + H(+). Its function is as follows. GTP hydrolase that promotes the GTP-dependent binding of aminoacyl-tRNA to the A-site of ribosomes during protein biosynthesis. This is Elongation factor Tu, chloroplastic (tufA) from Porphyra purpurea (Red seaweed).